A 537-amino-acid chain; its full sequence is Prolyl 4-hydroxylase subunit alpha-2 (537 aa).

The first 23 residues, 1-23, serve as a signal peptide directing secretion; it reads MKLQVLVLVLLMSWFGVLSWVQA. The N-linked (GlcNAc...) asparagine glycan is linked to Asn117. One copy of the TPR repeat lies at 209-242; sequence SLVLDYLSYAVFQLGDLHRAVELTRRLLSLDPSH. The N-linked (GlcNAc...) asparagine glycan is linked to Asn266. The Fe2OG dioxygenase domain occupies 414–522; sequence TAELLQVANY…KWVSNKWFHE (109 aa). Residues His432 and Asp434 each coordinate Fe cation. At Lys482 the chain carries N6-succinyllysine. Fe cation is bound at residue His503. Residue Lys513 participates in 2-oxoglutarate binding.

It belongs to the P4HA family. In terms of assembly, heterotetramer of two alpha-2 chains and two beta chains (P4HB) (the beta chain is the multi-functional PDI), where P4HB plays the role of a structural subunit; this tetramer catalyzes the formation of 4-hydroxyproline in collagen. Fe(2+) serves as cofactor. L-ascorbate is required as a cofactor. Expressed at least in brain, heart and lung.

It is found in the endoplasmic reticulum lumen. It catalyses the reaction L-prolyl-[collagen] + 2-oxoglutarate + O2 = trans-4-hydroxy-L-prolyl-[collagen] + succinate + CO2. Inhibited by poly(L-proline) only at very high concentrations. In terms of biological role, catalyzes the post-translational formation of 4-hydroxyproline in -Xaa-Pro-Gly- sequences in collagens and other proteins. This is Prolyl 4-hydroxylase subunit alpha-2 (P4ha2) from Mus musculus (Mouse).